A 318-amino-acid polypeptide reads, in one-letter code: CRISPR-associated protein Cas7/Csa2 1 (318 aa).

The protein belongs to the CRISPR-associated protein Cas7/Cst2/DevR family. Subtype I-a/Apern subfamily. Part of the aCascade ribonucleoprotein complex, minimally composed of Csa2 and Cas5a, which binds crRNA. Other possible components of aCascade in strain P1 are Cas6b (SSO1437) and Csa5 (SSO1443), while SSO1399, Cas5b (SSO1400) and SSO1401 have sometimes been seen weakly associated. Csa2 is probably the major RNA-binding subunit. The Csa2-Cas5a-crRNA complex also binds target DNA homologous to crRNA, probably forming an R-loop. Purified aCascade forms a filament about 6 nm in width.

In terms of biological role, CRISPR (clustered regularly interspaced short palindromic repeat) is an adaptive immune system that provides protection against mobile genetic elements (viruses, transposable elements and conjugative plasmids). CRISPR clusters contain spacers, sequences complementary to antecedent mobile elements, and target invading nucleic acids. CRISPR clusters are transcribed and processed into CRISPR RNA (crRNA). This is CRISPR-associated protein Cas7/Csa2 1 (cas7a) from Saccharolobus solfataricus (strain ATCC 35092 / DSM 1617 / JCM 11322 / P2) (Sulfolobus solfataricus).